Reading from the N-terminus, the 1040-residue chain is Multidrug resistance protein MdtB (1040 aa).

A run of 12 helical transmembrane segments spans residues 16–36 (FIMR…AGII), 347–367 (LMMA…NIPA), 369–389 (IIPG…MVFL), 396–416 (LTLM…IVVI), 440–460 (IGFT…PLLF), 472–492 (FAIT…TLTP), 537–557 (WLTL…WVFI), 863–883 (LGST…VLGI), 888–908 (FIHP…ALLA), 911–931 (IAGS…IGIV), 968–988 (ILMT…STGV), and 998–1018 (IGMV…TPVI).

It belongs to the resistance-nodulation-cell division (RND) (TC 2.A.6) family. MdtB subfamily. As to quaternary structure, part of a tripartite efflux system composed of MdtA, MdtB and MdtC. MdtB forms a heteromultimer with MdtC.

The protein resides in the cell inner membrane. Its function is as follows. The MdtABC tripartite complex confers resistance against novobiocin and deoxycholate. This chain is Multidrug resistance protein MdtB, found in Escherichia coli (strain 55989 / EAEC).